The sequence spans 162 residues: Beta-lactoglobulin-1 (162 aa).

Disulfide bonds link Cys-66–Cys-160 and Cys-106–Cys-119.

This sequence belongs to the calycin superfamily. Lipocalin family. As to quaternary structure, monomer. As to expression, synthesized in mammary gland and secreted in milk.

The protein localises to the secreted. Functionally, primary component of whey, it binds retinol and is probably involved in the transport of that molecule. The chain is Beta-lactoglobulin-1 (LGB1) from Equus asinus (Donkey).